A 263-amino-acid polypeptide reads, in one-letter code: tRNA1(Val) (adenine(37)-N6)-methyltransferase (263 aa).

This sequence belongs to the methyltransferase superfamily. tRNA (adenine-N(6)-)-methyltransferase family.

It is found in the cytoplasm. It catalyses the reaction adenosine(37) in tRNA1(Val) + S-adenosyl-L-methionine = N(6)-methyladenosine(37) in tRNA1(Val) + S-adenosyl-L-homocysteine + H(+). Specifically methylates the adenine in position 37 of tRNA(1)(Val) (anticodon cmo5UAC). The polypeptide is tRNA1(Val) (adenine(37)-N6)-methyltransferase (Pseudoalteromonas atlantica (strain T6c / ATCC BAA-1087)).